The following is a 378-amino-acid chain: Protein KlaB (378 aa).

This sequence belongs to the TelA family.

In terms of biological role, belongs to the kla operon, which is associated with cryptic tellurite resistance, and IncW plasmid fertility inhibition. The chain is Protein KlaB (klaB) from Escherichia coli.